Here is a 281-residue protein sequence, read N- to C-terminus: LC-AMP precursor 3 (281 aa).

The signal sequence occupies residues 1-19; the sequence is MKYTIIPFLLLVALTCATA. The propeptide occupies 20–56; that stretch reads RSIDGSEKEVQEIREETPSSNEDVPFSLSANEDEEAR. A Leucine amide modification is found at Leu-74. Positions 75-89 are excised as a propeptide; it reads GREESLSANEDEEAR. Ser-114 is subject to Serine amide. The propeptide occupies 115-129; it reads GREESFSANEDEEER. Leu-147 is modified (leucine amide). A propeptide spanning residues 148 to 162 is cleaved from the precursor; the sequence is GREESISANEDEETR. Leu-180 is subject to Leucine amide. Positions 181–195 are excised as a propeptide; that stretch reads GREESLSAIEDEEAR. The residue at position 213 (Leu-213) is a Leucine amide. A propeptide spanning residues 214-228 is cleaved from the precursor; that stretch reads GREESLSANEDEEAR. A Leucine amide modification is found at Leu-246. Residues 247 to 261 constitute a propeptide that is removed on maturation; that stretch reads GREESLSANEDEEAR. Leucine amide is present on Leu-279.

Expressed by the venom gland.

It localises to the secreted. Its function is as follows. Antimicrobial peptide that acts by influencing bacterial cell membrane permeability at low concentrations and by directly disrupting structure-function at high concentrations. Shows activity against Gram-negative bacteria (S.typhimurium CGMCC 1.1174 (MIC=2.5 uM), E.coli CCTCC AB 2018675 (MIC=5 uM), S.dysenteriae CGMCC 1.1869 (MIC=2.5 uM), P.aeruginosa CGMCC 1.596 (MIC 5-10 uM), K.pneumoniae (MIC=10 uM), A.baumannii (MIC=5-10 uM)), and Gram-positive bacteria (S.aureus CMCC 26003 or MRSA ATCC 43300 (MIC=5 uM), and E.faecium (MIC=2.5-5 uM)). Inhibits biofilm formation of E.coli and S.aureus in a dose-dependent manner and disrupts established biofilms. Demonstrates minimal bacterial resistance, excellent stability, negligible mammalian cell toxicity, low hemolytic activity, and appropriate selectivity for both normal and tumor cells. When combined with traditional antibiotics, exhibits additive or synergistic therapeutic effects. In vivo, in a neutropenic mouse thigh infection model, exhibits a therapeutic effect in inhibiting bacterial proliferation. In Lycosa coelestis (Wolf spider), this protein is LC-AMP precursor 3.